A 224-amino-acid chain; its full sequence is A-factor barrier protein 1 (224 aa).

An N-terminal signal peptide occupies residues 1–25; it reads MIFAPSFSLIKNILLVSFLISHSFA. Asparagine 148, asparagine 181, and asparagine 191 each carry an N-linked (GlcNAc...) asparagine glycan. The GPI-anchor amidated asparagine moiety is linked to residue asparagine 203. Positions 204 to 224 are cleaved as a propeptide — removed in mature form; sequence GAHAKSLYFPMALFGIFAVAL.

This sequence belongs to the SRP1/TIP1 family. The GPI-anchor is attached to the protein in the endoplasmic reticulum and serves to target the protein to the cell surface. There, the glucosamine-inositol phospholipid moiety is cleaved off and the GPI-modified mannoprotein is covalently attached via its lipidless GPI glycan remnant to the 1,6-beta-glucan of the outer cell wall layer.

It is found in the secreted. The protein resides in the cell wall. Its subcellular location is the membrane. Its function is as follows. MATalpha-specific protein that interferes with a-factor, the pheromone secreted by MATa cells. Contributes to mating efficiency. Acts to bind and sequester a-factor rather than to degrade it, and promotes the efficient mating of MATalpha cells by keeping the a-factor concentration at the plasma membrane within the narrow range needed for accurate pheromone gradient detection. This chain is A-factor barrier protein 1, found in Saccharomyces cerevisiae (strain ATCC 204508 / S288c) (Baker's yeast).